Consider the following 339-residue polypeptide: tRNA N6-adenosine threonylcarbamoyltransferase (339 aa).

Fe cation contacts are provided by His-111 and His-115. Substrate is bound by residues 134–138 (LVSGG), Asp-167, Gly-180, and Asn-274. Fe cation is bound at residue Asp-302.

It belongs to the KAE1 / TsaD family. Fe(2+) serves as cofactor.

Its subcellular location is the cytoplasm. The catalysed reaction is L-threonylcarbamoyladenylate + adenosine(37) in tRNA = N(6)-L-threonylcarbamoyladenosine(37) in tRNA + AMP + H(+). In terms of biological role, required for the formation of a threonylcarbamoyl group on adenosine at position 37 (t(6)A37) in tRNAs that read codons beginning with adenine. Is involved in the transfer of the threonylcarbamoyl moiety of threonylcarbamoyl-AMP (TC-AMP) to the N6 group of A37, together with TsaE and TsaB. TsaD likely plays a direct catalytic role in this reaction. The protein is tRNA N6-adenosine threonylcarbamoyltransferase of Methylobacillus flagellatus (strain ATCC 51484 / DSM 6875 / VKM B-1610 / KT).